Reading from the N-terminus, the 548-residue chain is Chaperonin GroEL (548 aa).

ATP contacts are provided by residues Thr-29–Pro-32, Lys-50, Asp-86–Thr-90, Gly-413, Asn-479–Ala-481, and Asp-496.

This sequence belongs to the chaperonin (HSP60) family. Forms a cylinder of 14 subunits composed of two heptameric rings stacked back-to-back. Interacts with the co-chaperonin GroES.

It localises to the cytoplasm. The enzyme catalyses ATP + H2O + a folded polypeptide = ADP + phosphate + an unfolded polypeptide.. Its function is as follows. Together with its co-chaperonin GroES, plays an essential role in assisting protein folding. The GroEL-GroES system forms a nano-cage that allows encapsulation of the non-native substrate proteins and provides a physical environment optimized to promote and accelerate protein folding. The chain is Chaperonin GroEL from Deinococcus radiodurans (strain ATCC 13939 / DSM 20539 / JCM 16871 / CCUG 27074 / LMG 4051 / NBRC 15346 / NCIMB 9279 / VKM B-1422 / R1).